A 709-amino-acid chain; its full sequence is Transcriptional factor SWI5 (709 aa).

S225 carries the post-translational modification Phosphoserine. Positions 245–264 (LSPMISPPMSNTSFTGSPSR) are enriched in polar residues. The tract at residues 245–267 (LSPMISPPMSNTSFTGSPSRRNN) is disordered. Phosphoserine is present on residues S278 and S300. T339 is subject to Phosphothreonine. At S376 the chain carries Phosphoserine. Positions 443–483 (LKPPSQQARHREGVFNDLDPNVLTKNTDNEGDDNEENEPES) are disordered. A compositionally biased stretch (acidic residues) spans 471–480 (NEGDDNEENE). S488, S492, and S505 each carry phosphoserine. At S522 the chain carries Phosphoserine; by CDC28. 3 consecutive C2H2-type zinc fingers follow at residues 550–574 (FECL…IQTH), 580–604 (YSCD…KKSH), and 609–632 (YACP…RMIC). Residues 635-659 (GKKYENVVIKRSPRKRGRPRKDGTS) carry the Nuclear localization signal motif. Residues 644–677 (KRSPRKRGRPRKDGTSSVSSSPIKENINKDHNGQ) form a disordered region. S646 is modified (phosphoserine; by CDC28). A DNA-binding region (a.T hook) is located at residues 647 to 659 (PRKRGRPRKDGTS). S664 carries the phosphoserine; by CDC28 modification.

Cell cycle-dependent phosphorylation of three serine residues prevents SWI5 from entering the nucleus, and it accumulates in the cytoplasm. As a consequence of CDC28 kinase inactivation at the end of anaphase, the three serine residues are dephosphorylated and SWI5 enters the nucleus to activate transcription. It is then rapidly degraded. Threonine phosphorylation also seems to occur. In terms of processing, phosphorylated by PHO85.

Its subcellular location is the nucleus. It is found in the cytoplasm. Determines the mother-cell-specific transcription of the HO endonuclease gene that is responsible for the initiation of mating-type switching in yeast. Recognizes a specific sequence in the promoter of the HO gene. Activates EGT2 transcription in a concentration-dependent manner. Synthesized during G2 and early mitosis. The polypeptide is Transcriptional factor SWI5 (SWI5) (Saccharomyces cerevisiae (strain ATCC 204508 / S288c) (Baker's yeast)).